We begin with the raw amino-acid sequence, 325 residues long: L-lactate dehydrogenase (325 aa).

NAD(+)-binding positions include valine 19, aspartate 40, lysine 45, tyrosine 70, and glycine 84–alanine 85. Glutamine 87 and arginine 93 together coordinate substrate. NAD(+)-binding positions include threonine 106, alanine 123 to asparagine 125, and serine 148. Asparagine 125–aspartate 128 lines the substrate pocket. Aspartate 153–arginine 156 contacts substrate. Beta-D-fructose 1,6-bisphosphate contacts are provided by arginine 158 and histidine 173. The active-site Proton acceptor is the histidine 180. Residue tyrosine 225 is modified to Phosphotyrosine. Threonine 234 is a binding site for substrate.

Belongs to the LDH/MDH superfamily. LDH family. As to quaternary structure, homotetramer.

The protein localises to the cytoplasm. The catalysed reaction is (S)-lactate + NAD(+) = pyruvate + NADH + H(+). It participates in fermentation; pyruvate fermentation to lactate; (S)-lactate from pyruvate: step 1/1. Allosterically activated by fructose 1,6-bisphosphate (FBP). Functionally, catalyzes the conversion of lactate to pyruvate. The polypeptide is L-lactate dehydrogenase (Latilactobacillus sakei subsp. sakei (strain 23K) (Lactobacillus sakei subsp. sakei)).